We begin with the raw amino-acid sequence, 350 residues long: Putative F-box protein At1g23770 (350 aa).

Residues 1-15 show a composition bias toward polar residues; the sequence is MDTGFADSNNDSSPG. The tract at residues 1-29 is disordered; that stretch reads MDTGFADSNNDSSPGEGSKRGNSGIEGPV. Residues 206-252 enclose the F-box domain; the sequence is PPCLMLLPTELKLKILELLPGVSIGYMACVCTEMRYLASDNDLWEHK.

This Arabidopsis thaliana (Mouse-ear cress) protein is Putative F-box protein At1g23770.